Here is a 380-residue protein sequence, read N- to C-terminus: uncharacterized protein (380 aa).

It belongs to the metallo-dependent hydrolases superfamily.

This is an uncharacterized protein from Methanocaldococcus jannaschii (strain ATCC 43067 / DSM 2661 / JAL-1 / JCM 10045 / NBRC 100440) (Methanococcus jannaschii).